The following is a 192-amino-acid chain: Ion-translocating oxidoreductase complex subunit A (192 aa).

Helical transmembrane passes span 5–25, 39–59, 65–85, 102–122, 134–154, and 171–191; these read ALIL…FLGL, TGMG…SYLV, APLG…AAVV, VLGI…VALL, ALYG…FASI, and AIAL…IGLV.

The protein belongs to the NqrDE/RnfAE family. In terms of assembly, the complex is composed of six subunits: RnfA, RnfB, RnfC, RnfD, RnfE and RnfG.

Its subcellular location is the cell inner membrane. Part of a membrane-bound complex that couples electron transfer with translocation of ions across the membrane. The protein is Ion-translocating oxidoreductase complex subunit A of Thioalkalivibrio sulfidiphilus (strain HL-EbGR7).